Reading from the N-terminus, the 202-residue chain is Ribonuclease HII (202 aa).

Residues 1–195 (MIVAGVDEVG…PELKGGSPAG (195 aa)) enclose the RNase H type-2 domain. 3 residues coordinate a divalent metal cation: Asp-7, Glu-8, and Asp-103.

It belongs to the RNase HII family. Mn(2+) serves as cofactor. Requires Mg(2+) as cofactor.

It localises to the cytoplasm. It catalyses the reaction Endonucleolytic cleavage to 5'-phosphomonoester.. Endonuclease that specifically degrades the RNA of RNA-DNA hybrids. This is Ribonuclease HII from Synechococcus sp. (strain RCC307).